Here is a 466-residue protein sequence, read N- to C-terminus: 3-isopropylmalate dehydratase large subunit (466 aa).

3 residues coordinate [4Fe-4S] cluster: C347, C407, and C410.

This sequence belongs to the aconitase/IPM isomerase family. LeuC type 1 subfamily. In terms of assembly, heterodimer of LeuC and LeuD. The cofactor is [4Fe-4S] cluster.

It carries out the reaction (2R,3S)-3-isopropylmalate = (2S)-2-isopropylmalate. It participates in amino-acid biosynthesis; L-leucine biosynthesis; L-leucine from 3-methyl-2-oxobutanoate: step 2/4. In terms of biological role, catalyzes the isomerization between 2-isopropylmalate and 3-isopropylmalate, via the formation of 2-isopropylmaleate. The sequence is that of 3-isopropylmalate dehydratase large subunit from Shigella sonnei (strain Ss046).